The sequence spans 321 residues: Phosphate metabolism protein 8 (321 aa).

It belongs to the SSM1 family.

Functionally, may be involved in phosphate metabolism. This Saccharomyces cerevisiae (strain ATCC 204508 / S288c) (Baker's yeast) protein is Phosphate metabolism protein 8 (PHM8).